The primary structure comprises 382 residues: Ribosomal RNA large subunit methyltransferase G (382 aa).

This sequence belongs to the methyltransferase superfamily. RlmG family.

The protein localises to the cytoplasm. The enzyme catalyses guanosine(1835) in 23S rRNA + S-adenosyl-L-methionine = N(2)-methylguanosine(1835) in 23S rRNA + S-adenosyl-L-homocysteine + H(+). Functionally, specifically methylates the guanine in position 1835 (m2G1835) of 23S rRNA. This is Ribosomal RNA large subunit methyltransferase G from Pseudoalteromonas translucida (strain TAC 125).